Here is a 77-residue protein sequence, read N- to C-terminus: MNKQGLFQMEGLVIESLPNAMFRVRLQNGFVILAHISGKIRRNYIRIIVGDRVLCELTPYDLTKGRIVYRQRSTPRP.

One can recognise an S1-like domain in the interval 1–72; that stretch reads MNKQGLFQME…TKGRIVYRQR (72 aa).

It belongs to the IF-1 family. Component of the 30S ribosomal translation pre-initiation complex which assembles on the 30S ribosome in the order IF-2 and IF-3, IF-1 and N-formylmethionyl-tRNA(fMet); mRNA recruitment can occur at any time during PIC assembly.

It localises to the plastid. It is found in the chloroplast. Functionally, one of the essential components for the initiation of protein synthesis. Stabilizes the binding of IF-2 and IF-3 on the 30S subunit to which N-formylmethionyl-tRNA(fMet) subsequently binds. Helps modulate mRNA selection, yielding the 30S pre-initiation complex (PIC). Upon addition of the 50S ribosomal subunit IF-1, IF-2 and IF-3 are released leaving the mature 70S translation initiation complex. In Nephroselmis olivacea (Green alga), this protein is Translation initiation factor IF-1, chloroplastic.